A 292-amino-acid polypeptide reads, in one-letter code: Acetyl-coenzyme A carboxylase carboxyl transferase subunit beta (292 aa).

The CoA carboxyltransferase N-terminal domain maps to 29 to 292 (LWSKCPECGQ…HGCLQGSAAV (264 aa)). Zn(2+)-binding residues include C33, C36, C52, and C55. The segment at 33-55 (CPECGQVVYRKDLLANASVCSNC) adopts a C4-type zinc-finger fold.

Belongs to the AccD/PCCB family. In terms of assembly, acetyl-CoA carboxylase is a heterohexamer composed of biotin carboxyl carrier protein (AccB), biotin carboxylase (AccC) and two subunits each of ACCase subunit alpha (AccA) and ACCase subunit beta (AccD). Requires Zn(2+) as cofactor.

Its subcellular location is the cytoplasm. It catalyses the reaction N(6)-carboxybiotinyl-L-lysyl-[protein] + acetyl-CoA = N(6)-biotinyl-L-lysyl-[protein] + malonyl-CoA. It functions in the pathway lipid metabolism; malonyl-CoA biosynthesis; malonyl-CoA from acetyl-CoA: step 1/1. Functionally, component of the acetyl coenzyme A carboxylase (ACC) complex. Biotin carboxylase (BC) catalyzes the carboxylation of biotin on its carrier protein (BCCP) and then the CO(2) group is transferred by the transcarboxylase to acetyl-CoA to form malonyl-CoA. The chain is Acetyl-coenzyme A carboxylase carboxyl transferase subunit beta from Synechococcus sp. (strain WH7803).